Reading from the N-terminus, the 475-residue chain is Ribulose bisphosphate carboxylase large chain (475 aa).

Residues 1 to 2 (MS) constitute a propeptide that is removed on maturation. Proline 3 is subject to N-acetylproline. Lysine 14 carries the N6,N6,N6-trimethyllysine modification. Substrate contacts are provided by asparagine 123 and threonine 173. Lysine 175 (proton acceptor) is an active-site residue. Lysine 177 is a binding site for substrate. Mg(2+) is bound by residues lysine 201, aspartate 203, and glutamate 204. N6-carboxylysine is present on lysine 201. Histidine 294 functions as the Proton acceptor in the catalytic mechanism. Substrate is bound by residues arginine 295, histidine 327, and serine 379.

Belongs to the RuBisCO large chain family. Type I subfamily. Heterohexadecamer of 8 large chains and 8 small chains. The cofactor is Mg(2+).

The protein localises to the plastid. Its subcellular location is the chloroplast. It carries out the reaction 2 (2R)-3-phosphoglycerate + 2 H(+) = D-ribulose 1,5-bisphosphate + CO2 + H2O. The catalysed reaction is D-ribulose 1,5-bisphosphate + O2 = 2-phosphoglycolate + (2R)-3-phosphoglycerate + 2 H(+). Its function is as follows. RuBisCO catalyzes two reactions: the carboxylation of D-ribulose 1,5-bisphosphate, the primary event in carbon dioxide fixation, as well as the oxidative fragmentation of the pentose substrate in the photorespiration process. Both reactions occur simultaneously and in competition at the same active site. In Chlorella vulgaris (Green alga), this protein is Ribulose bisphosphate carboxylase large chain.